The primary structure comprises 364 residues: Anthranilate phosphoribosyltransferase (364 aa).

Residues G101, 104–105 (GD), T109, 111–114 (NLST), 129–137 (KHGNRAASS), and G141 each bind 5-phospho-alpha-D-ribose 1-diphosphate. Anthranilate is bound at residue G101. S113 is a binding site for Mg(2+). N132 lines the anthranilate pocket. R187 contributes to the anthranilate binding site. The Mg(2+) site is built by D245 and E246.

Belongs to the anthranilate phosphoribosyltransferase family. In terms of assembly, homodimer. The cofactor is Mg(2+).

The catalysed reaction is N-(5-phospho-beta-D-ribosyl)anthranilate + diphosphate = 5-phospho-alpha-D-ribose 1-diphosphate + anthranilate. It functions in the pathway amino-acid biosynthesis; L-tryptophan biosynthesis; L-tryptophan from chorismate: step 2/5. Functionally, catalyzes the transfer of the phosphoribosyl group of 5-phosphorylribose-1-pyrophosphate (PRPP) to anthranilate to yield N-(5'-phosphoribosyl)-anthranilate (PRA). This Mycolicibacterium vanbaalenii (strain DSM 7251 / JCM 13017 / BCRC 16820 / KCTC 9966 / NRRL B-24157 / PYR-1) (Mycobacterium vanbaalenii) protein is Anthranilate phosphoribosyltransferase.